Here is a 1201-residue protein sequence, read N- to C-terminus: ATPase with bromodomain protein abo2 (1201 aa).

Disordered regions lie at residues 1–223 (MRRR…MRGP) and 305–324 (CDSDETSELSSTSSEQTSDV). Over residues 13–24 (DDNEDNEEDDDY) the composition is skewed to acidic residues. Residues 29–38 (HSEKSEDHSN) are compositionally biased toward basic and acidic residues. A compositionally biased stretch (polar residues) spans 66 to 89 (FSSLQKHLNTETPSFSVSIENPSK). Residues 129–146 (TDNNEDESTTFKDEEDDL) are compositionally biased toward acidic residues. The segment covering 212–221 (RRGRRKRKMR) has biased composition (basic residues). The span at 312–323 (ELSSTSSEQTSD) shows a compositional bias: low complexity. 413-420 (GPPGTGKT) provides a ligand contact to ATP. In terms of domain architecture, Bromo spans 897-1026 (KIKNKIQVKL…AHAELNVDEL (130 aa)).

This sequence belongs to the AAA ATPase family.

Its subcellular location is the nucleus. The enzyme catalyses ATP + H2O = ADP + phosphate + H(+). Functionally, probable ATPase which may play a role in nucleosome organization. This is ATPase with bromodomain protein abo2 from Schizosaccharomyces pombe (strain 972 / ATCC 24843) (Fission yeast).